The primary structure comprises 154 residues: Actin-related protein 2/3 complex subunit 5 (154 aa).

Threonine 142 carries the phosphothreonine modification.

The protein belongs to the ARPC5 family. Component of the Arp2/3 complex composed of ARP2, ARP3, ARC40/p41-ARC, ARC35/p34-ARC, ARC18/p21-ARC, ARC19/p20-ARC and ARC16/p16-ARC.

It localises to the cytoplasm. The protein resides in the cytoskeleton. It is found in the actin patch. Functions as a component of the Arp2/3 complex which is involved in regulation of actin polymerization and together with an activating nucleation-promoting factor (NPF) mediates the formation of branched actin networks. In Saccharomyces cerevisiae (strain ATCC 204508 / S288c) (Baker's yeast), this protein is Actin-related protein 2/3 complex subunit 5 (ARC15).